The primary structure comprises 113 residues: Large ribosomal subunit protein bL19 (113 aa).

The protein belongs to the bacterial ribosomal protein bL19 family.

Its function is as follows. This protein is located at the 30S-50S ribosomal subunit interface and may play a role in the structure and function of the aminoacyl-tRNA binding site. In Corynebacterium urealyticum (strain ATCC 43042 / DSM 7109), this protein is Large ribosomal subunit protein bL19.